Reading from the N-terminus, the 394-residue chain is Anthocyanidin 3-O-glucosyltransferase 6 (394 aa).

Asp-37 functions as the Charge relay in the catalytic mechanism. UDP-alpha-D-glucose is bound by residues Thr-59, Ala-267, Gln-269, His-284, Trp-287, Asn-288, Ser-289, and Glu-292. Ala-307 contributes to the an anthocyanidin binding site. UDP-alpha-D-glucose is bound by residues Glu-308 and Gln-309.

Belongs to the UDP-glycosyltransferase family. As to expression, expressed in cotyledons and leaves.

The catalysed reaction is an anthocyanidin + UDP-alpha-D-glucose + H(+) = an anthocyanidin 3-O-beta-D-glucoside + UDP. The protein operates within pigment biosynthesis; anthocyanin biosynthesis. In terms of biological role, in the presence of other necessary color factors, this glycosylation reaction allows the accumulation of anthocyanin pigments. May be involved in glycosylation of unstable cyanohydrins to produce stable cyanoglucosides. The sequence is that of Anthocyanidin 3-O-glucosyltransferase 6 (GT6) from Manihot esculenta (Cassava).